We begin with the raw amino-acid sequence, 356 residues long: 7,8-didemethyl-8-hydroxy-5-deazariboflavin synthase (356 aa).

The 241-residue stretch at 40 to 280 (ITYSKNVFIP…KDISIQVPPN (241 aa)) folds into the Radical SAM core domain. Positions 54, 58, and 61 each coordinate [4Fe-4S] cluster.

This sequence belongs to the radical SAM superfamily. CofG family. In terms of assembly, consists of two subunits, CofG and CofH. The cofactor is [4Fe-4S] cluster.

It catalyses the reaction 5-amino-5-(4-hydroxybenzyl)-6-(D-ribitylimino)-5,6-dihydrouracil + S-adenosyl-L-methionine = 7,8-didemethyl-8-hydroxy-5-deazariboflavin + 5'-deoxyadenosine + L-methionine + NH4(+) + H(+). It participates in cofactor biosynthesis; coenzyme F0 biosynthesis. In terms of biological role, catalyzes the radical-mediated synthesis of 7,8-didemethyl-8-hydroxy-5-deazariboflavin from 5-amino-5-(4-hydroxybenzyl)-6-(D-ribitylimino)-5,6-dihydrouracil. The protein is 7,8-didemethyl-8-hydroxy-5-deazariboflavin synthase of Methanococcus aeolicus (strain ATCC BAA-1280 / DSM 17508 / OCM 812 / Nankai-3).